A 1279-amino-acid polypeptide reads, in one-letter code: Sterol regulatory element-binding protein cleavage-activating protein (1279 aa).

Topologically, residues 1–18 (MTLTERLREKISQAFYNH) are cytoplasmic. Residues 19 to 39 (GLLCASYPIPIILFTGLCILA) traverse the membrane as a helical segment. Topologically, residues 40–279 (CCYPLLKLPL…SLVHVHFKEE (240 aa)) are lumenal. Residues 46–284 (KLPLPGTGPV…HFKEEIGIAE (239 aa)) are loop-1. The interval 60 to 81 (PVKDYSPPPSASDHKPGEPSEQ) is disordered. Asparagine 263 carries N-linked (GlcNAc...) asparagine glycosylation. A helical transmembrane segment spans residues 280-300 (IGIAELIPLVTTYIILFAYIY). The SSD domain maps to 284 to 442 (ELIPLVTTYI…MPFFTTVLSI (159 aa)). The Cytoplasmic segment spans residues 301–312 (FSTRKIDMVKSK). Residues 313 to 333 (WGLALAAVVTVLSSLLMSVGL) form a helical membrane-spanning segment. The Lumenal segment spans residues 334 to 344 (CTLFGLTPTLN). The helical transmembrane segment at 345-365 (GGEIFPYLVVVIGLENVLVLT) threads the bilayer. The Cytoplasmic segment spans residues 366–401 (KSVVSTPVDLEVKLRIAQGLSSESWSIMKNMATELG). A helical transmembrane segment spans residues 402–422 (IILIGYFTLVPAIQEFCLFAV). A topological domain (lumenal) is located at residue valine 423. A helical membrane pass occupies residues 424 to 444 (GLVSDFFLQMPFFTTVLSIDI). The Cytoplasmic portion of the chain corresponds to 445 to 518 (RRMELADLNK…FLARTRLAQR (74 aa)). An ER export signal motif is present at residues 447–452 (MELADL). Residues lysine 454 and lysine 466 each participate in a glycyl lysine isopeptide (Lys-Gly) (interchain with G-Cter in ubiquitin) cross-link. Residues 519–539 (LIMAGTVVWIGILAYTDPAGL) form a helical membrane-spanning segment. The loop-7 stretch occupies residues 535–710 (DPAGLRTYLA…QAHRDVTLYK (176 aa)). Residues 540–707 (RTYLAAQVTE…GVAQAHRDVT (168 aa)) lie on the Lumenal side of the membrane. Residues 588–617 (LENQTLPGEPPEPGGQAEGVHDSPAPEVTW) are disordered. Asparagine 590 and asparagine 641 each carry an N-linked (GlcNAc...) asparagine glycan. The interval 668-696 (EGRHPQDSRSAWSPPQPAQGGLWDAGPKG) is disordered. The chain crosses the membrane as a helical span at residues 708–728 (LYKVAALGLATGILLVLLLCL). Over 729–1279 (YRVLCPRNYG…YVPSVLEKLD (551 aa)) the chain is Cytoplasmic. Residues 730–1279 (RVLCPRNYGQ…YVPSVLEKLD (550 aa)) form an interaction with SREBF2 region. The WD 1 repeat unit spans residues 770-810 (VLRGHLMDIECLASDGMLLVSCCLAGHVCVWDAQTGDCLTR). Phosphoserine is present on residues serine 821, serine 837, serine 843, and serine 850. Disordered stretches follow at residues 834–868 (ERLSDGGKASPEEPGDSPPLRHRPRGTPLPSLFGD), 883–903 (HPRLPELDHPEPRHRSGCRRT), and 925–959 (VPMHTPAPRPPSPGPTPPQTPEDEGSFPPEKGSPS). Over residues 885 to 896 (RLPELDHPEPRH) the composition is skewed to basic and acidic residues. Residues 929-944 (TPAPRPPSPGPTPPQT) are compositionally biased toward pro residues. At serine 936 the chain carries Phosphoserine. WD repeat units follow at residues 952 to 1002 (PPEK…LRCS) and 1005 to 1042 (EVASGITALVFLDKRIVAARLNGSLDFFSLETHTALSP). At arginine 1051 the chain carries Omega-N-methylarginine. WD repeat units lie at residues 1077–1114 (AHQKPITALKAAAGRLVTGSQDHTLRVFRLEDSCCLFT), 1117–1155 (GHSGAITTVYIDQTMVLASGGQDGAICLWDVLTGSRVSH), 1158–1195 (AHRGDVTSLTCTTSCVISSGLDDLISIWDRSTGIKLYS), and 1197–1235 (QQDLGCGASLGVISDNLLVTGGQGCVSFWDLNYGDLLQT).

Belongs to the WD repeat SCAP family. In terms of assembly, membrane region forms a homotetramer. Component of the SCAP-SREBP complex (composed of SCAP and SREBF1/SREBP1 or SREBF2/SREBP2); interacts with SREBF1/SREBP1 or SREBF2/SREBP2 through its C-terminal cytoplasmic domain. Forms a ternary complex with INSIG1 or INSIG2 through its transmembrane domains at high sterol concentrations. Interacts with PAQR3; the interaction anchors the SCAP-SREBP complex to the Golgi apparatus in low cholesterol conditions. Interacts with the SEC23-SEC24 complex in a SAR1-GTP-dependent manner through an ER export signal in its third cytoplasmic loop. Interacts with RNF139; the interaction inhibits the interaction of SCAP with SEC24B and hampering the ER to Golgi transport of the SCAP-SREBP complex. Interacts with SPRING1. In terms of processing, ubiquitinated at Lys-454 and Lys-466. RNF145 triggers ubiquitination of SCAP, likely inhibiting SCAP-SREBP complex transport to the Golgi apparatus and the subsequent processing/maturation of SREBF2/SREBP2. In terms of tissue distribution, widely expressed with higher levels in lung, kidney, gut, brain and adipose tissue. Expressed in liver and muscle. Isoform 3 expressed in testis. As to expression, expressed in testis.

The protein localises to the endoplasmic reticulum membrane. It is found in the golgi apparatus membrane. It localises to the cytoplasmic vesicle. The protein resides in the COPII-coated vesicle membrane. Escort protein required for cholesterol as well as lipid homeostasis. Regulates export of the SCAP-SREBP complex from the endoplasmic reticulum to the Golgi upon low cholesterol, thereby regulating the processing of sterol regulatory element-binding proteins (SREBPs) SREBF1/SREBP1 and SREBF2/SREBP2. At high sterol concentrations, formation of a ternary complex with INSIG (INSIG1 or INSIG2) leads to mask the ER export signal in SCAP, promoting retention of the complex in the endoplasmic reticulum. Low sterol concentrations trigger release of INSIG, a conformational change in the SSD domain of SCAP, unmasking of the ER export signal, promoting recruitment into COPII-coated vesicles and transport of the SCAP-SREBP to the Golgi: in the Golgi, SREBPs are then processed, releasing the transcription factor fragment of SREBPs from the membrane, its import into the nucleus and up-regulation of LDLR, INSIG1 and the mevalonate pathway. Binds cholesterol via its SSD domain. The sequence is that of Sterol regulatory element-binding protein cleavage-activating protein from Sus scrofa (Pig).